A 444-amino-acid chain; its full sequence is Methylenetetrahydrofolate--tRNA-(uracil-5-)-methyltransferase TrmFO (444 aa).

10–15 (GAGLAG) serves as a coordination point for FAD.

The protein belongs to the MnmG family. TrmFO subfamily. The cofactor is FAD.

The protein resides in the cytoplasm. The enzyme catalyses uridine(54) in tRNA + (6R)-5,10-methylene-5,6,7,8-tetrahydrofolate + NADH + H(+) = 5-methyluridine(54) in tRNA + (6S)-5,6,7,8-tetrahydrofolate + NAD(+). It carries out the reaction uridine(54) in tRNA + (6R)-5,10-methylene-5,6,7,8-tetrahydrofolate + NADPH + H(+) = 5-methyluridine(54) in tRNA + (6S)-5,6,7,8-tetrahydrofolate + NADP(+). Catalyzes the folate-dependent formation of 5-methyl-uridine at position 54 (M-5-U54) in all tRNAs. This Streptococcus mutans serotype c (strain ATCC 700610 / UA159) protein is Methylenetetrahydrofolate--tRNA-(uracil-5-)-methyltransferase TrmFO.